The sequence spans 1057 residues: MAGNDWINSYLEAILDVGPGLDDAKSSLLLRERGRFSPTRYFVEEVITGFDETDLHRSWVKAQATRSPQERNTRLENMCWRIWNLARQKKQLEGEAAQRMAKRRLERERGRREATADMSEDLSEGEKGDIVSDVSAHGDSTRSRLPRISSVDAMETWISQQKGKKLYIVLISIHGLIRGENMELGRDSDTGGQVKYVVELARALGSMPGVYRVDLLTRQVSAPDVDWSYGEPTEMLTPRNSDDFMDDMGESSGAYIIRIPFGPKDKYIAKELLWPHIPEFVDGALNHIIRMSNVLGEQIGGGKPVWPVAIHGHYADAGDSAALLSGALNVPMLFTGHSLGRDKLEQLLKQARLSRDEINATYKIMRRIEAEELSLDASEIVITSTRQEIEEQWRLYDGFDPVLERKLRARIKRNVSCYGKFMPRMAIIPPGMEFHHIVPQDGDMDGETEGNEDNPASPDPPIWSEIMRFFTNPRKPVILALARPDPKKNITTLVKAFGECRPLRELANLTLIMGNRDGIDEMSSTSASVLLSVLKLIDKYDLYGQVAYPKHHKQSDVPEIYRLAAKTKGVFINPAFIEPFGLTLIEAAAHGLPIVATKNGGPVDIHRVLDNGLLVDPHDQQSIADALLKLVAGKQLWARCRQNGLKNIHLFSWPEHCKTYLSRIAGCKPRHPQWQRTDDGGETSESDSPGDSLRDIQDISLNLKFSLDGEKSGASGNDDSLDSEGNVADRKSRLENAVLAWSKGVLKDTRKSGSTDKVDQNTGAAKFPALRRRKHIFVISVDCDSTTGLLDATKKICEAVEKERTEGSIGFILSTSMTISEIHSFLVSGHLSPSDFDAFICNSGSDLYYSTLNSEDGPFVVDFYYHSHIEYRWGGEGLRKTLVRWASQVTDKKAESGEKVLTPAEQLSTNYCYAFSVQKPGMTPPVKELRKVLRIQALRCHVIYCQNGSRVNVIPVLASRSQALRYLYLRWGVELSKMVVFVGESGDTDYEGLLGGVHKTVILKGICSSSSNQIHANRSYPLSDVMPIDSPNIVQTPEDCTTSDIRSSLEQLGLLKV.

Over residues 103–115 the composition is skewed to basic and acidic residues; it reads RRLERERGRREAT. Disordered regions lie at residues 103 to 143, 439 to 459, and 670 to 693; these read RRLE…STRS, PQDGDMDGETEGNEDNPASPD, and RHPQWQRTDDGGETSESDSPGDSL. A compositionally biased stretch (acidic residues) spans 442–452; it reads GDMDGETEGNE.

It belongs to the glycosyltransferase 1 family. As to quaternary structure, homodimer or homotetramer.

It catalyses the reaction beta-D-fructose 6-phosphate + UDP-alpha-D-glucose = sucrose 6(F)-phosphate + UDP + H(+). The protein operates within glycan biosynthesis; sucrose biosynthesis; sucrose from D-fructose 6-phosphate and UDP-alpha-D-glucose: step 1/2. Its activity is regulated as follows. Activity is regulated by phosphorylation and moderated by concentration of metabolites and light. In terms of biological role, plays a role in photosynthetic sucrose synthesis by catalyzing the rate-limiting step of sucrose biosynthesis from UDP-glucose and fructose- 6-phosphate. Involved in the regulation of carbon partitioning in the leaves of plants. May regulate the synthesis of sucrose and therefore play a major role as a limiting factor in the export of photoassimilates out of the leaf. Plays a role for sucrose availability that is essential for plant growth and fiber elongation. The sequence is that of Probable sucrose-phosphate synthase 1 (SPS1) from Citrus unshiu (Satsuma mandarin).